The primary structure comprises 198 residues: Recombination protein RecR (198 aa).

The C4-type zinc finger occupies 57-72; sequence CSICGRLTDDDPCSIC. A Toprim domain is found at 80 to 175; that stretch reads TTILVLEDSR…KVTRLARGLA (96 aa).

It belongs to the RecR family.

Functionally, may play a role in DNA repair. It seems to be involved in an RecBC-independent recombinational process of DNA repair. It may act with RecF and RecO. The protein is Recombination protein RecR of Streptococcus pneumoniae serotype 2 (strain D39 / NCTC 7466).